We begin with the raw amino-acid sequence, 1324 residues long: Coiled-coil domain-containing protein 171 (1324 aa).

Coiled-coil stretches lie at residues 29-296 (KNET…RAAH), 325-393 (AEAV…RLQY), 453-521 (FSVV…KCAD), 599-712 (SELC…VREN), and 981-1145 (FTQR…KECV). Positions 1301–1312 (PHSLSSQSSPGV) are enriched in polar residues. Residues 1301–1324 (PHSLSSQSSPGVPTNAKRPSQIGL) are disordered.

The polypeptide is Coiled-coil domain-containing protein 171 (Ccdc171) (Mus musculus (Mouse)).